Reading from the N-terminus, the 283-residue chain is Elongation factor Ts (283 aa).

The tract at residues 80-83 (TDFV) is involved in Mg(2+) ion dislocation from EF-Tu.

This sequence belongs to the EF-Ts family.

Its subcellular location is the cytoplasm. Associates with the EF-Tu.GDP complex and induces the exchange of GDP to GTP. It remains bound to the aminoacyl-tRNA.EF-Tu.GTP complex up to the GTP hydrolysis stage on the ribosome. This chain is Elongation factor Ts, found in Enterobacter sp. (strain 638).